Reading from the N-terminus, the 189-residue chain is ATP-dependent protease subunit HslV (189 aa).

Thr12 is a catalytic residue. Residues Ser172, Cys175, and Thr178 each contribute to the Na(+) site.

It belongs to the peptidase T1B family. HslV subfamily. In terms of assembly, a double ring-shaped homohexamer of HslV is capped on each side by a ring-shaped HslU homohexamer. The assembly of the HslU/HslV complex is dependent on binding of ATP.

It is found in the cytoplasm. It catalyses the reaction ATP-dependent cleavage of peptide bonds with broad specificity.. Its activity is regulated as follows. Allosterically activated by HslU binding. In terms of biological role, protease subunit of a proteasome-like degradation complex believed to be a general protein degrading machinery. The polypeptide is ATP-dependent protease subunit HslV (Ehrlichia chaffeensis (strain ATCC CRL-10679 / Arkansas)).